The sequence spans 460 residues: uncharacterized protein (460 aa).

To yeast YGL164c.

This is an uncharacterized protein from Schizosaccharomyces pombe (strain 972 / ATCC 24843) (Fission yeast).